Consider the following 270-residue polypeptide: Phosphatidylglycerol--prolipoprotein diacylglyceryl transferase (270 aa).

4 helical membrane-spanning segments follow: residues 19–39 (FPVY…LWLA), 56–76 (LVLI…VIFE), 92–112 (QGGL…ILFA), and 116–136 (GVSF…GQAI). Arg138 is an a 1,2-diacyl-sn-glycero-3-phospho-(1'-sn-glycerol) binding site. 3 helical membrane-spanning segments follow: residues 178 to 198 (HPTF…LLAL), 206 to 226 (GELF…VEGL), and 236 to 256 (LRIA…FIIV).

It belongs to the Lgt family.

Its subcellular location is the cell membrane. The enzyme catalyses L-cysteinyl-[prolipoprotein] + a 1,2-diacyl-sn-glycero-3-phospho-(1'-sn-glycerol) = an S-1,2-diacyl-sn-glyceryl-L-cysteinyl-[prolipoprotein] + sn-glycerol 1-phosphate + H(+). Its pathway is protein modification; lipoprotein biosynthesis (diacylglyceryl transfer). Functionally, catalyzes the transfer of the diacylglyceryl group from phosphatidylglycerol to the sulfhydryl group of the N-terminal cysteine of a prolipoprotein, the first step in the formation of mature lipoproteins. This is Phosphatidylglycerol--prolipoprotein diacylglyceryl transferase from Bacillus cereus (strain G9842).